A 478-amino-acid chain; its full sequence is Protein nucleotidyltransferase YdiU (478 aa).

ATP contacts are provided by Gly84, Gly86, Arg87, Lys107, Asp119, Gly120, Arg170, and Arg177. Asp246 acts as the Proton acceptor in catalysis. The Mg(2+) site is built by Asn247 and Asp256. Position 256 (Asp256) interacts with ATP.

This sequence belongs to the SELO family. The cofactor is Mg(2+). It depends on Mn(2+) as a cofactor.

The enzyme catalyses L-seryl-[protein] + ATP = 3-O-(5'-adenylyl)-L-seryl-[protein] + diphosphate. The catalysed reaction is L-threonyl-[protein] + ATP = 3-O-(5'-adenylyl)-L-threonyl-[protein] + diphosphate. It carries out the reaction L-tyrosyl-[protein] + ATP = O-(5'-adenylyl)-L-tyrosyl-[protein] + diphosphate. It catalyses the reaction L-histidyl-[protein] + UTP = N(tele)-(5'-uridylyl)-L-histidyl-[protein] + diphosphate. The enzyme catalyses L-seryl-[protein] + UTP = O-(5'-uridylyl)-L-seryl-[protein] + diphosphate. The catalysed reaction is L-tyrosyl-[protein] + UTP = O-(5'-uridylyl)-L-tyrosyl-[protein] + diphosphate. In terms of biological role, nucleotidyltransferase involved in the post-translational modification of proteins. It can catalyze the addition of adenosine monophosphate (AMP) or uridine monophosphate (UMP) to a protein, resulting in modifications known as AMPylation and UMPylation. This is Protein nucleotidyltransferase YdiU from Escherichia coli O17:K52:H18 (strain UMN026 / ExPEC).